A 156-amino-acid chain; its full sequence is NAD(P)H-quinone oxidoreductase subunit N (156 aa).

Belongs to the complex I NdhN subunit family. As to quaternary structure, NDH-1 can be composed of about 15 different subunits; different subcomplexes with different compositions have been identified which probably have different functions.

It is found in the cellular thylakoid membrane. It carries out the reaction a plastoquinone + NADH + (n+1) H(+)(in) = a plastoquinol + NAD(+) + n H(+)(out). The catalysed reaction is a plastoquinone + NADPH + (n+1) H(+)(in) = a plastoquinol + NADP(+) + n H(+)(out). Functionally, NDH-1 shuttles electrons from an unknown electron donor, via FMN and iron-sulfur (Fe-S) centers, to quinones in the respiratory and/or the photosynthetic chain. The immediate electron acceptor for the enzyme in this species is believed to be plastoquinone. Couples the redox reaction to proton translocation, and thus conserves the redox energy in a proton gradient. Cyanobacterial NDH-1 also plays a role in inorganic carbon-concentration. The polypeptide is NAD(P)H-quinone oxidoreductase subunit N (Prochlorococcus marinus subsp. pastoris (strain CCMP1986 / NIES-2087 / MED4)).